The following is a 158-amino-acid chain: Small ribosomal subunit protein uS7 (158 aa).

It belongs to the universal ribosomal protein uS7 family. As to quaternary structure, part of the 30S ribosomal subunit. Contacts proteins S9 and S11.

In terms of biological role, one of the primary rRNA binding proteins, it binds directly to 16S rRNA where it nucleates assembly of the head domain of the 30S subunit. Is located at the subunit interface close to the decoding center, probably blocks exit of the E-site tRNA. The polypeptide is Small ribosomal subunit protein uS7 (Gluconobacter oxydans (strain 621H) (Gluconobacter suboxydans)).